The primary structure comprises 908 residues: DNA mismatch repair protein MutS (908 aa).

Residue 659–666 (GPNMAGKS) coordinates ATP.

The protein belongs to the DNA mismatch repair MutS family.

This protein is involved in the repair of mismatches in DNA. It is possible that it carries out the mismatch recognition step. This protein has a weak ATPase activity. The protein is DNA mismatch repair protein MutS of Parvibaculum lavamentivorans (strain DS-1 / DSM 13023 / NCIMB 13966).